Reading from the N-terminus, the 405-residue chain is LanC-like protein GCL2 (405 aa).

Zn(2+)-binding residues include C278, C323, and H324.

Belongs to the LanC-like protein family.

Functionally, may play a role in signaling. May be not involved in abscisic acid (ABA) signaling. The chain is LanC-like protein GCL2 (GCL2) from Arabidopsis thaliana (Mouse-ear cress).